The sequence spans 280 residues: Acyl-[acyl-carrier-protein]--UDP-N-acetylglucosamine O-acyltransferase (280 aa).

Belongs to the transferase hexapeptide repeat family. LpxA subfamily. Homotrimer.

The protein resides in the cytoplasm. The catalysed reaction is a (3R)-hydroxyacyl-[ACP] + UDP-N-acetyl-alpha-D-glucosamine = a UDP-3-O-[(3R)-3-hydroxyacyl]-N-acetyl-alpha-D-glucosamine + holo-[ACP]. It functions in the pathway glycolipid biosynthesis; lipid IV(A) biosynthesis; lipid IV(A) from (3R)-3-hydroxytetradecanoyl-[acyl-carrier-protein] and UDP-N-acetyl-alpha-D-glucosamine: step 1/6. Involved in the biosynthesis of lipid A, a phosphorylated glycolipid that anchors the lipopolysaccharide to the outer membrane of the cell. The sequence is that of Acyl-[acyl-carrier-protein]--UDP-N-acetylglucosamine O-acyltransferase from Chlamydia trachomatis serovar L2 (strain ATCC VR-902B / DSM 19102 / 434/Bu).